The chain runs to 572 residues: Protein misato homolog 1 (572 aa).

Belongs to the misato family.

The protein resides in the mitochondrion outer membrane. The protein localises to the cytoplasm. Involved in the regulation of mitochondrial distribution and morphology. Required for mitochondrial fusion and mitochondrial network formation. The chain is Protein misato homolog 1 (MSTO1) from Bos taurus (Bovine).